The chain runs to 247 residues: Cell division protein ZapD (247 aa).

Belongs to the ZapD family. As to quaternary structure, interacts with FtsZ.

It is found in the cytoplasm. Functionally, cell division factor that enhances FtsZ-ring assembly. Directly interacts with FtsZ and promotes bundling of FtsZ protofilaments, with a reduction in FtsZ GTPase activity. The polypeptide is Cell division protein ZapD (Shigella boydii serotype 4 (strain Sb227)).